The following is a 330-amino-acid chain: Flotillin-like protein FloA (330 aa).

2 consecutive transmembrane segments (helical) span residues 6–26 (LLLF…FTFV) and 28–48 (VMLW…TLVG).

Belongs to the flotillin-like FloA family. In terms of assembly, homooligomerizes.

It localises to the cell membrane. It is found in the membrane raft. Its function is as follows. Found in functional membrane microdomains (FMM) that may be equivalent to eukaryotic membrane rafts. FMMs are highly dynamic and increase in number as cells age. Flotillins are thought to be important factors in membrane fluidity. The polypeptide is Flotillin-like protein FloA (Bacillus pumilus (strain SAFR-032)).